The chain runs to 129 residues: SOSS complex subunit C homolog (129 aa).

Residues 105–129 (RLEPLPSPATTPTTPNAPPSHSISK) form a disordered region.

It belongs to the SOSS-C family.

The protein is SOSS complex subunit C homolog of Drosophila simulans (Fruit fly).